The sequence spans 136 residues: ATP synthase epsilon chain (136 aa).

This sequence belongs to the ATPase epsilon chain family. In terms of assembly, F-type ATPases have 2 components, CF(1) - the catalytic core - and CF(0) - the membrane proton channel. CF(1) has five subunits: alpha(3), beta(3), gamma(1), delta(1), epsilon(1). CF(0) has three main subunits: a, b and c.

The protein localises to the cell inner membrane. Its function is as follows. Produces ATP from ADP in the presence of a proton gradient across the membrane. This Agrobacterium fabrum (strain C58 / ATCC 33970) (Agrobacterium tumefaciens (strain C58)) protein is ATP synthase epsilon chain.